Reading from the N-terminus, the 65-residue chain is Small ribosomal subunit protein bS21 (65 aa).

A compositionally biased stretch (basic and acidic residues) spans 43–52 (EKKRVKEALA). A disordered region spans residues 43–65 (EKKRVKEALARKRSRKKARKEQD). A compositionally biased stretch (basic residues) spans 53–65 (RKRSRKKARKEQD).

The protein belongs to the bacterial ribosomal protein bS21 family.

The sequence is that of Small ribosomal subunit protein bS21 from Koribacter versatilis (strain Ellin345).